The primary structure comprises 415 residues: Multidrug resistance protein MdtA (415 aa).

Positions 1–21 (MKGSYKSRWVIVIVVVIAAIA) are cleaved as a signal peptide. Disordered stretches follow at residues 32–60 (SRSAAPGATKQAQQSPAGGRRGMRSGPLA) and 392–415 (EAQSATTPEEKATSREYAKKGARS). Residues 399-415 (PEEKATSREYAKKGARS) show a composition bias toward basic and acidic residues.

This sequence belongs to the membrane fusion protein (MFP) (TC 8.A.1) family. In terms of assembly, part of a tripartite efflux system composed of MdtA, MdtB and MdtC.

It localises to the cell inner membrane. In terms of biological role, the MdtABC tripartite complex confers resistance against novobiocin and deoxycholate. The protein is Multidrug resistance protein MdtA of Escherichia coli (strain 55989 / EAEC).